A 579-amino-acid chain; its full sequence is MSQSTIKFDLGELTTTQCARLLSKFIRKATLTPEQFEILNTSYDELTEFDDHPLYGGATDHHKDIVGKYDHALLKPAVYQQLRDFATKMESSSWQQTEIDAESDIPTWEQISENERDCVRKVLAFFAVGDTLVKDRIAIFADEFPLPECKDFIDWQTVNEGVHQRVYNNYLDALVKDKIYLADLVNAYKDPEFAPIKKKVDWLGKIISVENDSRGEMVVGQVCTEAIMFAASFAILLKFRAPYMRALVLGNEFIRRDETLHFRFYAELLRLMPDRPSDERIAELLTEATEIELEFAEYVVPEGVKYITKDRLIQHVKANTNQVCEMLDINPIYFDQKGNVLLSPLLYMNTLESEQKINFFEGKATEYNTKQYKVDFNNLFPPVKKMIEFADEEEFIAAIVEGEGLSKDRNKDIVKQQLCLAWDHLSSHDMEGLVDMTWTLKDVHRIAMNHVIFNNGEFSNGYKFTVIDSGKVMYPTYETVEILESAVQGLIDDYNRDFSALDKGVEKFDKDKIRVAARFILDLLYIHPFSDGNGRTARLIMAHLIGKMTTPINREEYLKSIYHYRQTGDVSVFVDQFYR.

Residues aspartate 130, glutamate 160, and histidine 163 each contribute to the Fe cation site. Tyrosine 167 is a catalytic residue. Residues glutamate 225, glutamate 258, and histidine 261 each contribute to the Fe cation site. The region spanning 435–579 (DMTWTLKDVH…VSVFVDQFYR (145 aa)) is the Fido domain.

This sequence belongs to the ribonucleoside diphosphate reductase small chain family. In terms of assembly, heterotetramer composed of a homodimer of the large subunit (R1) and a homodimer of the small subunit (R2). Larger multisubunit protein complex are also active, composed of (R1)n(R2)n. Requires Fe cation as cofactor.

It carries out the reaction a 2'-deoxyribonucleoside 5'-diphosphate + [thioredoxin]-disulfide + H2O = a ribonucleoside 5'-diphosphate + [thioredoxin]-dithiol. In terms of biological role, ribonucleoside-diphosphate reductase holoenzyme provides the precursors necessary for viral DNA synthesis. Allows virus growth in non-dividing cells. Catalyzes the biosynthesis of deoxyribonucleotides from the corresponding ribonucleotides. This Magallana gigas (Pacific oyster) protein is Ribonucleoside-diphosphate reductase small chain.